Here is a 178-residue protein sequence, read N- to C-terminus: MSTPPLAPTGMASGPFGGPQAQQAAREVNTATLCRIGQETVQDIVYRTMEIFQLLRNMQLPNGVTYHTGTYQDRLTKLQDHLRQLSILFRKLRLVYDKCNENCGGMDPIPVEQLIPYVDEDGSKNDDRAGPPRFASEERREIVEVNKKLKQKNQQLKQIMDQLRNLIWDINAMLAMRN.

The tract at residues 1 to 22 is disordered; that stretch reads MSTPPLAPTGMASGPFGGPQAQ. At Ser2 the chain carries N-acetylserine. Residues 134-173 adopt a coiled-coil conformation; that stretch reads FASEERREIVEVNKKLKQKNQQLKQIMDQLRNLIWDINAM.

Belongs to the Mediator complex subunit 30 family. As to quaternary structure, component of the Mediator complex, which is composed of MED1, MED4, MED6, MED7, MED8, MED9, MED10, MED11, MED12, MED13, MED13L, MED14, MED15, MED16, MED17, MED18, MED19, MED20, MED21, MED22, MED23, MED24, MED25, MED26, MED27, MED29, MED30, MED31, CCNC, CDK8 and CDC2L6/CDK11. The MED12, MED13, CCNC and CDK8 subunits form a distinct module termed the CDK8 module. Mediator containing the CDK8 module is less active than Mediator lacking this module in supporting transcriptional activation. Individual preparations of the Mediator complex lacking one or more distinct subunits have been variously termed ARC, CRSP, DRIP, PC2, SMCC and TRAP.

It localises to the nucleus. Functionally, component of the Mediator complex, a coactivator involved in the regulated transcription of nearly all RNA polymerase II-dependent genes. Mediator functions as a bridge to convey information from gene-specific regulatory proteins to the basal RNA polymerase II transcription machinery. Mediator is recruited to promoters by direct interactions with regulatory proteins and serves as a scaffold for the assembly of a functional preinitiation complex with RNA polymerase II and the general transcription factors. The polypeptide is Mediator of RNA polymerase II transcription subunit 30 (Med30) (Mus musculus (Mouse)).